The chain runs to 672 residues: Glycerophosphocholine phosphodiesterase GPCPD1 (672 aa).

In terms of domain architecture, CBM20 spans 1-113 (MTPSQVTFEI…IIIDDGQFGI (113 aa)). Residues R68 and 86–87 (HK) contribute to the substrate site. Residue S175 is modified to Phosphoserine. One can recognise a GP-PDE domain in the interval 318-618 (PLDVGHRGAG…DRIYDWMPEQ (301 aa)). Y608 is modified (phosphotyrosine).

The protein belongs to the glycerophosphoryl diester phosphodiesterase family.

It is found in the cytoplasm. It localises to the cytosol. It catalyses the reaction sn-glycerol 3-phosphocholine + H2O = sn-glycerol 3-phosphate + choline + H(+). Functionally, may be involved in the negative regulation of skeletal muscle differentiation, independently of its glycerophosphocholine phosphodiesterase activity. The polypeptide is Glycerophosphocholine phosphodiesterase GPCPD1 (Gpcpd1) (Rattus norvegicus (Rat)).